Consider the following 255-residue polypeptide: Small ribosomal subunit protein eS1 (255 aa).

The residue at position 2 (Ala2) is an N-acetylalanine; partial.

This sequence belongs to the eukaryotic ribosomal protein eS1 family. In terms of assembly, component of the small ribosomal subunit. Mature ribosomes consist of a small (40S) and a large (60S) subunit. The 40S subunit contains about 33 different proteins and 1 molecule of RNA (18S). The 60S subunit contains about 49 different proteins and 3 molecules of RNA (25S, 5.8S and 5S).

It is found in the cytoplasm. This Pyrenophora tritici-repentis (strain Pt-1C-BFP) (Wheat tan spot fungus) protein is Small ribosomal subunit protein eS1 (rps1).